A 533-amino-acid polypeptide reads, in one-letter code: 2,3-bisphosphoglycerate-independent phosphoglycerate mutase (533 aa).

Mn(2+)-binding residues include Asp-15 and Ser-65. Ser-65 serves as the catalytic Phosphoserine intermediate. Substrate contacts are provided by residues His-126, 156 to 157, Arg-188, Arg-194, 258 to 261, and Lys-331; these read RD and RPDR. Asp-398, His-402, Asp-439, His-440, and His-457 together coordinate Mn(2+).

The protein belongs to the BPG-independent phosphoglycerate mutase family. In terms of assembly, monomer. Mn(2+) is required as a cofactor.

It carries out the reaction (2R)-2-phosphoglycerate = (2R)-3-phosphoglycerate. The protein operates within carbohydrate degradation; glycolysis; pyruvate from D-glyceraldehyde 3-phosphate: step 3/5. In terms of biological role, catalyzes the interconversion of 2-phosphoglycerate and 3-phosphoglycerate. The sequence is that of 2,3-bisphosphoglycerate-independent phosphoglycerate mutase from Nostoc sp. (strain PCC 7120 / SAG 25.82 / UTEX 2576).